The following is a 557-amino-acid chain: Nucleolin 1 (557 aa).

3 disordered regions span residues 1–297 (MGKS…GGSK), 376–398 (GERGERPAFTPQSGNFRSGGDGG), and 474–557 (LVVD…FGDE). The segment covering 49–63 (QKEKAVKKVPKKVES) has biased composition (basic and acidic residues). Acidic residues-rich tracts occupy residues 64–74 (SDDSDSESEEE), 91–101 (ESSDDSSSDDE), and 124–135 (SSSDDDSSDEEV). Positions 174 to 184 (AKIAKPAAKDS) are enriched in low complexity. The span at 186 to 197 (SSDDDSDEDSED) shows a compositional bias: acidic residues. The segment covering 203–217 (KKAAPAAAKAASSSD) has biased composition (low complexity). A compositionally biased stretch (acidic residues) spans 218-229 (SSDEDSDEESED). A compositionally biased stretch (basic and acidic residues) spans 230 to 247 (EKPAQKKADTKASKKSSS). Positions 249–263 (ESSESEEDESEDEEE) are enriched in acidic residues. The span at 264 to 281 (TPKKKSSDVEMVDAEKSS) shows a compositional bias: basic and acidic residues. Positions 297-374 (KTLFAANLSF…REIRLDIAQE (78 aa)) constitute an RRM 1 domain. In terms of domain architecture, RRM 2 spans 401–481 (KKIFVKGFDA…FYLVVDEPRP (81 aa)). The span at 485-503 (SSGGGGFGRGNGRFGSGGG) shows a compositional bias: gly residues.

Interacts with THAL in the nucleus. Expressed in roots, leaves, shoots and flowers.

The protein localises to the nucleus. The protein resides in the nucleolus. Its function is as follows. Involved in pre-rRNA processing and ribosome assembly. Is associated with intranucleolar chromatin and pre-ribosomal particles and plays a role in controlling activation and repression of a specific subset of rRNA genes located in distinctive nucleolar organizer regions. Binds specifically rDNA chromatin and may be required to maintain rDNA chromatin structure, but is probably not required for the overall histone methylation status of 45S rRNA genes. Involved in leaf polarity establishment by functioning cooperatively with AS1 to repress abaxial genes ARF3, ARF4, KAN1, KAN2, YAB1 and YAB5, and the knox homeobox genes KNAT1, KNAT2, KNAT6, and STM to promote adaxial development in leaf primordia at shoot apical meristems at high temperatures. The polypeptide is Nucleolin 1 (Arabidopsis thaliana (Mouse-ear cress)).